The chain runs to 350 residues: Sulfate-binding protein (350 aa).

The N-terminal stretch at 1-40 (MKTAWTRRSFLQSAALATATVITIAACGGNNQSSSGGSGQ) is a signal peptide.

This sequence belongs to the prokaryotic sulfate-binding protein family.

Its subcellular location is the periplasm. Its function is as follows. This protein specifically binds sulfate and is involved in its transmembrane transport. The sequence is that of Sulfate-binding protein (sbpA) from Synechococcus elongatus (strain ATCC 33912 / PCC 7942 / FACHB-805) (Anacystis nidulans R2).